Here is a 595-residue protein sequence, read N- to C-terminus: MSKSTIDLKQLSIQSSFPNSQKRYVTGSRSDIRVPFREISQHPTVTDSGEAENEPILVYDSSGPYTDESYEVNIEKGLPAIRKSWILERGDCEKYEGRDVRPEDNGFTKDDDPRAAREVFPRTSSHKPLRAKKGANVTQMHYAKKGIVTPEMEFVAIRENVSPEFVRDELARGRAILPSNINHPESEPMIIGRNFHVKINANIGNSAVSSSIAEEVEKMTWATRWGADTIMDLSTGKNIHTTREWIIRNSPVPVGTVPIYQALEKVNGVAEDLTWEVYRDTLIEQAEQGVDYFTIHAGVLLRYIPLTAKRVTGIVSRGGSIMAQWCLYHHKENFLYTHFEEICEIMKTYDIAFSLGDGLRPGSIADANDEAQFAELETLGELTKIAWEHDVQVMVEGPGHVPMHQIKENMDKQLDICQEAPFYTLGPLTTDIAPGYDHITSAIGAAMIGWYGTAMLCYVTPKEHLGLPNKDDVREGVITYKIAAHAADLAKGHPGAQKRDDALSKARFEFRWRDQFNLSLDPERAMEFHDETLPAEGAKTAHFCSMCGPKFCSMRISQDIRTYAKEQGLDTEEAIEKGLEEKADEFKQAGGNLYR.

The span at 97–120 (GRDVRPEDNGFTKDDDPRAAREVF) shows a compositional bias: basic and acidic residues. The segment at 97–134 (GRDVRPEDNGFTKDDDPRAAREVFPRTSSHKPLRAKKG) is disordered. The span at 124–133 (SSHKPLRAKK) shows a compositional bias: basic residues. Substrate is bound by residues Asn-202, Met-231, Tyr-260, His-296, 316-318 (SRG), 357-360 (DGLR), and Glu-396. His-400 contributes to the Zn(2+) binding site. Residue Tyr-423 participates in substrate binding. A Zn(2+)-binding site is contributed by His-464. [4Fe-4S] cluster contacts are provided by Cys-544, Cys-547, and Cys-552.

It belongs to the ThiC family. [4Fe-4S] cluster serves as cofactor.

The enzyme catalyses 5-amino-1-(5-phospho-beta-D-ribosyl)imidazole + S-adenosyl-L-methionine = 4-amino-2-methyl-5-(phosphooxymethyl)pyrimidine + CO + 5'-deoxyadenosine + formate + L-methionine + 3 H(+). It functions in the pathway cofactor biosynthesis; thiamine diphosphate biosynthesis. Functionally, catalyzes the synthesis of the hydroxymethylpyrimidine phosphate (HMP-P) moiety of thiamine from aminoimidazole ribotide (AIR) in a radical S-adenosyl-L-methionine (SAM)-dependent reaction. This Halalkalibacterium halodurans (strain ATCC BAA-125 / DSM 18197 / FERM 7344 / JCM 9153 / C-125) (Bacillus halodurans) protein is Phosphomethylpyrimidine synthase.